We begin with the raw amino-acid sequence, 176 residues long: uncharacterized protein (176 aa).

The first 20 residues, 1–20, serve as a signal peptide directing secretion; it reads MIKKISIILITLFIIQLTKS. Positions 26–46 are disordered; it reads NNNNNNNNNNNNNNNNNNNNN. Residue Asn-120 is glycosylated (N-linked (GlcNAc...) asparagine).

Belongs to the Dictyostelium gerABC family.

It is found in the secreted. This is an uncharacterized protein from Dictyostelium discoideum (Social amoeba).